Consider the following 355-residue polypeptide: UDP-N-acetylglucosamine--N-acetylmuramyl-(pentapeptide) pyrophosphoryl-undecaprenol N-acetylglucosamine transferase (355 aa).

Residues 14–16 (TGG), N126, R162, S190, I244, and Q289 contribute to the UDP-N-acetyl-alpha-D-glucosamine site.

This sequence belongs to the glycosyltransferase 28 family. MurG subfamily.

The protein localises to the cell inner membrane. It carries out the reaction di-trans,octa-cis-undecaprenyl diphospho-N-acetyl-alpha-D-muramoyl-L-alanyl-D-glutamyl-meso-2,6-diaminopimeloyl-D-alanyl-D-alanine + UDP-N-acetyl-alpha-D-glucosamine = di-trans,octa-cis-undecaprenyl diphospho-[N-acetyl-alpha-D-glucosaminyl-(1-&gt;4)]-N-acetyl-alpha-D-muramoyl-L-alanyl-D-glutamyl-meso-2,6-diaminopimeloyl-D-alanyl-D-alanine + UDP + H(+). It participates in cell wall biogenesis; peptidoglycan biosynthesis. Functionally, cell wall formation. Catalyzes the transfer of a GlcNAc subunit on undecaprenyl-pyrophosphoryl-MurNAc-pentapeptide (lipid intermediate I) to form undecaprenyl-pyrophosphoryl-MurNAc-(pentapeptide)GlcNAc (lipid intermediate II). The sequence is that of UDP-N-acetylglucosamine--N-acetylmuramyl-(pentapeptide) pyrophosphoryl-undecaprenol N-acetylglucosamine transferase from Paracidovorax citrulli (strain AAC00-1) (Acidovorax citrulli).